The primary structure comprises 212 residues: HTH-type transcriptional regulator RutR (212 aa).

The HTH tetR-type domain occupies 17-77 (SAKKKAILSA…AVLRQILDIW (61 aa)). Residues 39–58 (TRLEQIAELAGVSKTNLLYY) constitute a DNA-binding region (H-T-H motif).

Homodimer.

In terms of biological role, master transcription regulator which represses the degradation of pyrimidines (rutABCDEFG) and purines (gcl operon) for maintenance of metabolic balance between pyrimidines and purines. It also regulates the synthesis of pyrimidine nucleotides and arginine from glutamine (carAB) and the supply of glutamate (gadABWX). The polypeptide is HTH-type transcriptional regulator RutR (rutR) (Escherichia coli O6:H1 (strain CFT073 / ATCC 700928 / UPEC)).